We begin with the raw amino-acid sequence, 63 residues long: MKATELKDKSVEELNTELLNLLREQFNLRMQASTGQLEKTDQIRKVRRSIARVKTILTQKAAA.

It belongs to the universal ribosomal protein uL29 family.

This Pseudoalteromonas atlantica (strain T6c / ATCC BAA-1087) protein is Large ribosomal subunit protein uL29.